A 478-amino-acid chain; its full sequence is UDP-N-acetylmuramate--L-alanine ligase (478 aa).

125-131 lines the ATP pocket; it reads GTHGKTT.

Belongs to the MurCDEF family.

The protein resides in the cytoplasm. It carries out the reaction UDP-N-acetyl-alpha-D-muramate + L-alanine + ATP = UDP-N-acetyl-alpha-D-muramoyl-L-alanine + ADP + phosphate + H(+). It participates in cell wall biogenesis; peptidoglycan biosynthesis. In terms of biological role, cell wall formation. The sequence is that of UDP-N-acetylmuramate--L-alanine ligase from Dichelobacter nodosus (strain VCS1703A).